Consider the following 122-residue polypeptide: Small ribosomal subunit protein uS13 (122 aa).

The segment at 93–122 is disordered; that stretch reads RRGLPVRGQRTKTNARTRKGPKKTIAGKKK.

It belongs to the universal ribosomal protein uS13 family. Part of the 30S ribosomal subunit. Forms a loose heterodimer with protein S19. Forms two bridges to the 50S subunit in the 70S ribosome.

Functionally, located at the top of the head of the 30S subunit, it contacts several helices of the 16S rRNA. In the 70S ribosome it contacts the 23S rRNA (bridge B1a) and protein L5 of the 50S subunit (bridge B1b), connecting the 2 subunits; these bridges are implicated in subunit movement. Contacts the tRNAs in the A and P-sites. This chain is Small ribosomal subunit protein uS13, found in Corynebacterium urealyticum (strain ATCC 43042 / DSM 7109).